Reading from the N-terminus, the 380-residue chain is MTTSTRGAAKVPAVLVLEDGRTFRGRAYGAVGVTFGEAVFSTGMTGYQETLTDPSYHRQVVVMTAPHVGNTGVNDEDPESKRIWVSGYVVRDPARVPSNWRSRRSLDEELRHQGVVGISGIDTRALTRHLRESGAMRVGIFSGSALPDEGTMLAEVRQAPEMKGANLAAEVATKETYVVPAIGAKRFTVAAVDLGIKGMTPHRMAERGIEVHVLPATATAEDVYAVNPDGVFFSNGPGDPATADGPVAVMREVLARKTPLFGICFGNQILGRALGFGTYKLKYGHRGINQPVQDRTTGKVEVTAHNHGFAVDAPLDQVSDTPYGRAEVSHVCLNDNVVEGLQLLDQPAFSVQYHPEAAAGPHDAAYLFDRFVSLMEGQRA.

The segment at 1-187 is CPSase; it reads MTTSTRGAAK…VVPAIGAKRF (187 aa). Ser-55, Gly-236, and Gly-238 together coordinate L-glutamine. One can recognise a Glutamine amidotransferase type-1 domain in the interval 188 to 380; that stretch reads TVAAVDLGIK…FVSLMEGQRA (193 aa). Residue Cys-264 is the Nucleophile of the active site. L-glutamine-binding residues include Phe-265, Gln-268, Asn-306, Gly-308, and Phe-309. Active-site residues include His-354 and Glu-356.

The protein belongs to the CarA family. As to quaternary structure, composed of two chains; the small (or glutamine) chain promotes the hydrolysis of glutamine to ammonia, which is used by the large (or ammonia) chain to synthesize carbamoyl phosphate. Tetramer of heterodimers (alpha,beta)4.

The enzyme catalyses hydrogencarbonate + L-glutamine + 2 ATP + H2O = carbamoyl phosphate + L-glutamate + 2 ADP + phosphate + 2 H(+). It catalyses the reaction L-glutamine + H2O = L-glutamate + NH4(+). It functions in the pathway amino-acid biosynthesis; L-arginine biosynthesis; carbamoyl phosphate from bicarbonate: step 1/1. The protein operates within pyrimidine metabolism; UMP biosynthesis via de novo pathway; (S)-dihydroorotate from bicarbonate: step 1/3. Functionally, small subunit of the glutamine-dependent carbamoyl phosphate synthetase (CPSase). CPSase catalyzes the formation of carbamoyl phosphate from the ammonia moiety of glutamine, carbonate, and phosphate donated by ATP, constituting the first step of 2 biosynthetic pathways, one leading to arginine and/or urea and the other to pyrimidine nucleotides. The small subunit (glutamine amidotransferase) binds and cleaves glutamine to supply the large subunit with the substrate ammonia. This chain is Carbamoyl phosphate synthase small chain, found in Streptomyces avermitilis (strain ATCC 31267 / DSM 46492 / JCM 5070 / NBRC 14893 / NCIMB 12804 / NRRL 8165 / MA-4680).